The following is an 85-amino-acid chain: Large ribosomal subunit protein bL27 (85 aa).

Belongs to the bacterial ribosomal protein bL27 family.

In Sodalis glossinidius (strain morsitans), this protein is Large ribosomal subunit protein bL27.